Consider the following 418-residue polypeptide: MIPVFLAAVAAFLPLTSGHIAFWHNSMYGFNVTEQTFPYDNRPVVPLQYMTFQEWWFHNHLDYPPHPGDFFDFPAGKAATAELACNKGATTWFNSSEGGNIQNGNDPCPGSPPSEYHTTGIDDVKGCAMAIAYESDVRKIKPEDFTVFSVNQTCVWYRFTDFQVPERMPPCPPGGCHCAWFWIHSPDSGGEQIYMNGFQCNITGSTSHVPLAKPKVARRCGADPDHGKPDAVPGNCTYGAKQPLYWLQKEGNNEFDDYIAPPFYNDLYNFKDGAQNDIFVDSYPDGIPDPSPEQTIVPTPVNAAAVAAATPAPSSSGSSPSSSSPGSSSTASTTSTSGPRPSARGFRRSTGERPPTGVPTPRKSWTQTRKLRYVCLDRARIVLCCKGLALMVHRLALQRGRHQEPSAQGASLAFLAAG.

The signal sequence occupies residues Met-1 to Gly-18. Residues Asn-31, Asn-94, and Asn-151 are each glycosylated (N-linked (GlcNAc...) asparagine). Disulfide bonds link Cys-85-Cys-108, Cys-127-Cys-154, Cys-171-Cys-176, and Cys-178-Cys-200. 2 N-linked (GlcNAc...) asparagine glycosylation sites follow: Asn-201 and Asn-235. Residues Cys-220 and Cys-236 are joined by a disulfide bond. Positions Ala-307–Ala-343 are enriched in low complexity. The tract at residues Ala-307–Ser-364 is disordered.

The protein belongs to the polysaccharide monooxygenase AA14 family. Cu(2+) serves as cofactor.

The protein localises to the secreted. Its function is as follows. Lytic polysaccharide monooxygenase (LPMO) that oxidatively cleaves xylan with both C1 and C4 regioselectivity and that specifically targets the protective shield made by heteroxylans that cover cellulose microfibrils in wood. Catalysis by LPMOs requires the reduction of the active-site copper from Cu(II) to Cu(I) by a reducing agent and H(2)O(2) or O(2) as a cosubstrate. Cleavage occurs only when xylans are bound to cellulose and not when they are in solution. Increases the efficiency of wood saccharification through oxidative cleavage of highly refractory xylan-coated cellulose fibers via synergistic relationship with xylan-active enzymes, xylobiohydrolases and cellobiohydrolases. This chain is AA14 family lytic polysaccharide monooxygenase B, found in Trametes coccinea (strain BRFM310) (Pycnoporus coccineus).